The primary structure comprises 775 residues: Phosphoribosylformylglycinamidine synthase subunit PurL (775 aa).

Residue histidine 81 is part of the active site. 2 residues coordinate ATP: tyrosine 84 and lysine 123. Glutamate 125 is a binding site for Mg(2+). Substrate is bound by residues 126–129 (SHNH) and arginine 148. Catalysis depends on histidine 127, which acts as the Proton acceptor. Residue aspartate 149 coordinates Mg(2+). Glutamine 272 contacts substrate. Aspartate 300 contacts Mg(2+). Position 344 to 346 (344 to 346 (ESQ)) interacts with substrate. Residues aspartate 525 and glycine 562 each contribute to the ATP site. Asparagine 563 is a Mg(2+) binding site. Residue serine 565 coordinates substrate.

This sequence belongs to the FGAMS family. Monomer. Part of the FGAM synthase complex composed of 1 PurL, 1 PurQ and 2 PurS subunits.

The protein resides in the cytoplasm. It carries out the reaction N(2)-formyl-N(1)-(5-phospho-beta-D-ribosyl)glycinamide + L-glutamine + ATP + H2O = 2-formamido-N(1)-(5-O-phospho-beta-D-ribosyl)acetamidine + L-glutamate + ADP + phosphate + H(+). It functions in the pathway purine metabolism; IMP biosynthesis via de novo pathway; 5-amino-1-(5-phospho-D-ribosyl)imidazole from N(2)-formyl-N(1)-(5-phospho-D-ribosyl)glycinamide: step 1/2. In terms of biological role, part of the phosphoribosylformylglycinamidine synthase complex involved in the purines biosynthetic pathway. Catalyzes the ATP-dependent conversion of formylglycinamide ribonucleotide (FGAR) and glutamine to yield formylglycinamidine ribonucleotide (FGAM) and glutamate. The FGAM synthase complex is composed of three subunits. PurQ produces an ammonia molecule by converting glutamine to glutamate. PurL transfers the ammonia molecule to FGAR to form FGAM in an ATP-dependent manner. PurS interacts with PurQ and PurL and is thought to assist in the transfer of the ammonia molecule from PurQ to PurL. The sequence is that of Phosphoribosylformylglycinamidine synthase subunit PurL from Agrobacterium fabrum (strain C58 / ATCC 33970) (Agrobacterium tumefaciens (strain C58)).